Here is a 437-residue protein sequence, read N- to C-terminus: Nuclear hormone receptor family member nhr-100 (437 aa).

Positions 21-96 (DTSCLVCGDP…VGMDANAVRS (76 aa)) form a DNA-binding region, nuclear receptor. 2 consecutive NR C4-type zinc fingers follow at residues 24–44 (CLVC…CNGC) and 60–79 (CSFN…CRAC). In terms of domain architecture, NR LBD spans 141 to 409 (QTKEIIAHML…SGGGLPYDIH (269 aa)).

Belongs to the nuclear hormone receptor family.

The protein resides in the nucleus. Orphan nuclear receptor. In Caenorhabditis elegans, this protein is Nuclear hormone receptor family member nhr-100 (nhr-100).